The chain runs to 440 residues: Xaa-Pro dipeptidase (440 aa).

Mn(2+) contacts are provided by aspartate 244, aspartate 255, histidine 335, glutamate 380, and glutamate 419.

The protein belongs to the peptidase M24B family. Bacterial-type prolidase subfamily. Mn(2+) is required as a cofactor.

The catalysed reaction is Xaa-L-Pro dipeptide + H2O = an L-alpha-amino acid + L-proline. Splits dipeptides with a prolyl residue in the C-terminal position. In Shewanella halifaxensis (strain HAW-EB4), this protein is Xaa-Pro dipeptidase.